Here is a 198-residue protein sequence, read N- to C-terminus: DNA polymerase zeta subunit 2 (198 aa).

The region spanning Glu4 to Ile196 is the HORMA domain.

The protein belongs to the MAD2 family. As to quaternary structure, accessory subunit of the zeta DNA polymerase complex, which consists of the catalytic component PolZ1/DNApol-zeta and PolZ2/Rev7. Interacts with the apurinic/apyrimidinic (AP) endonuclease Rrp1 (via the N-terminus).

In terms of biological role, as the accessory component of the DNA polymerase zeta complex, involved in translesion DNA synthesis (TLS) and various DNA repair mechanisms. Promotes the apurinic/apyrimidinic (AP) endonuclease activity of Rrp1 and is therefore likely to be involved in the base excision repair (BER) pathway responsible for repair of DNA lesions. It does not appear to influence the synthesis activity of the catalytic component Dmpol-zeta. This Drosophila melanogaster (Fruit fly) protein is DNA polymerase zeta subunit 2.